A 411-amino-acid polypeptide reads, in one-letter code: Adenylosuccinate synthetase (411 aa).

Residues 11–17 (GDEGKGK) and 39–41 (GHT) contribute to the GTP site. Catalysis depends on Asp-12, which acts as the Proton acceptor. Residues Asp-12 and Gly-39 each coordinate Mg(2+). Residues 12–15 (DEGK), 37–40 (NAGH), Thr-121, Arg-135, Gln-215, Thr-230, and Arg-294 each bind IMP. His-40 (proton donor) is an active-site residue. Position 290 to 296 (290 to 296 (TTTKRPR)) interacts with substrate. GTP is bound by residues Arg-296, 322–324 (KLD), and 400–402 (STS).

This sequence belongs to the adenylosuccinate synthetase family. Homodimer. The cofactor is Mg(2+).

It is found in the cytoplasm. It catalyses the reaction IMP + L-aspartate + GTP = N(6)-(1,2-dicarboxyethyl)-AMP + GDP + phosphate + 2 H(+). It functions in the pathway purine metabolism; AMP biosynthesis via de novo pathway; AMP from IMP: step 1/2. Functionally, plays an important role in the de novo pathway of purine nucleotide biosynthesis. Catalyzes the first committed step in the biosynthesis of AMP from IMP. This is Adenylosuccinate synthetase from Helicobacter pylori (strain HPAG1).